We begin with the raw amino-acid sequence, 183 residues long: Caltractin ICL1c (183 aa).

The segment at 1 to 30 is disordered; the sequence is MARRGQQPPPQQQQAPPTQKNQAGKFNPAE. EF-hand domains follow at residues 39–74, 75–110, 112–147, and 148–183; these read EEVLEIKEAFDLFDTDGTQSIDPKELKAAMTSLGFE, AKNQTIYQMISDLDTDGSGQIDFAEFLKLMTARISE, DSKADIQKVFNLFDSERAGVITLKDLRKVAKELGET, and MDDSELQEMIDRADSDGDAQVTFEDFYNIMTKKTFA. Residues aspartate 52, aspartate 54, threonine 56, serine 58, glutamate 63, aspartate 88, aspartate 90, serine 92, glutamine 94, and glutamate 99 each coordinate Ca(2+).

This sequence belongs to the centrin family. As to quaternary structure, monomer.

The protein resides in the cytoplasm. Its subcellular location is the cytoskeleton. Its function is as follows. Plays a fundamental role in microtubule organizing center structure and function. Component of the infraciliary lattice (ICL) and the ciliary basal bodies. This is Caltractin ICL1c (Icl1c) from Paramecium tetraurelia.